We begin with the raw amino-acid sequence, 88 residues long: Small ribosomal subunit protein bS20 (88 aa).

The protein belongs to the bacterial ribosomal protein bS20 family.

Its function is as follows. Binds directly to 16S ribosomal RNA. In Clostridium botulinum (strain ATCC 19397 / Type A), this protein is Small ribosomal subunit protein bS20.